We begin with the raw amino-acid sequence, 125 residues long: Small ribosomal subunit protein uS13 (125 aa).

A compositionally biased stretch (basic residues) spans 94–116 (GLPVRGQRTRTNARTRKGPRKAV). The disordered stretch occupies residues 94 to 125 (GLPVRGQRTRTNARTRKGPRKAVRASSAKAGR).

Belongs to the universal ribosomal protein uS13 family. In terms of assembly, part of the 30S ribosomal subunit. Forms a loose heterodimer with protein S19. Forms two bridges to the 50S subunit in the 70S ribosome.

Functionally, located at the top of the head of the 30S subunit, it contacts several helices of the 16S rRNA. In the 70S ribosome it contacts the 23S rRNA (bridge B1a) and protein L5 of the 50S subunit (bridge B1b), connecting the 2 subunits; these bridges are implicated in subunit movement. Contacts the tRNAs in the A and P-sites. This chain is Small ribosomal subunit protein uS13, found in Nitrosospira multiformis (strain ATCC 25196 / NCIMB 11849 / C 71).